We begin with the raw amino-acid sequence, 176 residues long: Peptide methionine sulfoxide reductase MsrA (176 aa).

Cys10 is a catalytic residue.

The protein belongs to the MsrA Met sulfoxide reductase family.

The catalysed reaction is L-methionyl-[protein] + [thioredoxin]-disulfide + H2O = L-methionyl-(S)-S-oxide-[protein] + [thioredoxin]-dithiol. It catalyses the reaction [thioredoxin]-disulfide + L-methionine + H2O = L-methionine (S)-S-oxide + [thioredoxin]-dithiol. Its function is as follows. Has an important function as a repair enzyme for proteins that have been inactivated by oxidation. Catalyzes the reversible oxidation-reduction of methionine sulfoxide in proteins to methionine. The polypeptide is Peptide methionine sulfoxide reductase MsrA (Sulfolobus acidocaldarius (strain ATCC 33909 / DSM 639 / JCM 8929 / NBRC 15157 / NCIMB 11770)).